The chain runs to 557 residues: Selenoprotein N (557 aa).

The disordered stretch occupies residues 1-24; that stretch reads MGQARPAARRPHSPDPGAQPAPPR. An N-terminal signal peptide occupies residues 1–42; the sequence is MGQARPAARRPHSPDPGAQPAPPRRRARALALLGALLAAAAA. Positions 67–102 constitute an EF-hand domain; that stretch reads VLGTDGLFLFSSLDTDQDMYISPEEFKPIAEKLTGS. N-linked (GlcNAc...) asparagine glycosylation occurs at N156. A non-standard amino acid (selenocysteine) is located at residue U428. Residues N449 and N497 are each glycosylated (N-linked (GlcNAc...) asparagine).

Interacts with RYR1, RYR2 and RYR3. In terms of processing, N-glycosylated.

The protein localises to the endoplasmic reticulum membrane. Functionally, plays an important role in cell protection against oxidative stress and in the regulation of redox-related calcium homeostasis. Regulates the calcium level of the ER by protecting the calcium pump ATP2A2 against the oxidoreductase ERO1A-mediated oxidative damage. Within the ER, ERO1A activity increases the concentration of H(2)O(2), which attacks the luminal thiols in ATP2A2 and thus leads to cysteinyl sulfenic acid formation (-SOH) and SEPN1 reduces the SOH back to free thiol (-SH), thus restoring ATP2A2 activity. Acts as a modulator of ryanodine receptor (RyR) activity: protects RyR from oxidation due to increased oxidative stress, or directly controls the RyR redox state, regulating the RyR-mediated calcium mobilization required for normal muscle development and differentiation. Essential for muscle regeneration and satellite cell maintenance in skeletal muscle. This is Selenoprotein N from Mus musculus (Mouse).